The sequence spans 266 residues: UPF0246 protein Pcryo_0542 (266 aa).

This sequence belongs to the UPF0246 family.

The chain is UPF0246 protein Pcryo_0542 from Psychrobacter cryohalolentis (strain ATCC BAA-1226 / DSM 17306 / VKM B-2378 / K5).